The primary structure comprises 201 residues: Recombination protein RecR (201 aa).

The segment at 57–72 adopts a C4-type zinc-finger fold; the sequence is CADCRTFTEQEICTIC. One can recognise a Toprim domain in the interval 81-176; sequence GLICVVESPA…DASRIAHGVP (96 aa).

It belongs to the RecR family.

May play a role in DNA repair. It seems to be involved in an RecBC-independent recombinational process of DNA repair. It may act with RecF and RecO. The protein is Recombination protein RecR of Erwinia tasmaniensis (strain DSM 17950 / CFBP 7177 / CIP 109463 / NCPPB 4357 / Et1/99).